Reading from the N-terminus, the 136-residue chain is ATP synthase F(0) complex subunit C1, mitochondrial (136 aa).

Residues Met-1–Arg-61 constitute a mitochondrion transit peptide. Residues Val-77 to Tyr-97 traverse the membrane as a helical segment. The residue at position 104 (Lys-104) is an N6,N6,N6-trimethyllysine. Residues Ile-112 to Ile-132 form a helical membrane-spanning segment.

It belongs to the ATPase C chain family. Homooctamer; the c-ring consists of eight c subunits forming a circle, and each subunit adopts a hairpin shape. Component of the ATP synthase complex composed at least of ATP5F1A/subunit alpha, ATP5F1B/subunit beta, ATP5MC1/subunit c (homooctomer), MT-ATP6/subunit a, MT-ATP8/subunit 8, ATP5ME/subunit e, ATP5MF/subunit f, ATP5MG/subunit g, ATP5MK/subunit k, ATP5MJ/subunit j, ATP5F1C/subunit gamma, ATP5F1D/subunit delta, ATP5F1E/subunit epsilon, ATP5PF/subunit F6, ATP5PB/subunit b, ATP5PD/subunit d, ATP5PO/subunit OSCP. ATP synthase complex consists of a soluble F(1) head domain (subunits alpha(3) and beta(3)) - the catalytic core - and a membrane F(0) domain - the membrane proton channel (subunits c, a, 8, e, f, g, k and j). These two domains are linked by a central stalk (subunits gamma, delta, and epsilon) rotating inside the F1 region and a stationary peripheral stalk (subunits F6, b, d, and OSCP). Interacts with TMEM70 (homooligomer form); this interaction facilitates the oligomer formation of subunit c/ATP5MC1 (c-ring) and the c-ring membrane insertion and also protects ATP5MC1 against intramitochondrial proteolysis. Trimethylated by ATPSCKMT at Lys-104. Methylation is required for proper incorporation of the C subunit into the ATP synthase complex and mitochondrial respiration.

The protein resides in the mitochondrion membrane. It carries out the reaction H(+)(in) = H(+)(out). In terms of biological role, subunit c, of the mitochondrial membrane ATP synthase complex (F(1)F(0) ATP synthase or Complex V) that produces ATP from ADP in the presence of a proton gradient across the membrane which is generated by electron transport complexes of the respiratory chain. ATP synthase complex consist of a soluble F(1) head domain - the catalytic core - and a membrane F(1) domain - the membrane proton channel. These two domains are linked by a central stalk rotating inside the F(1) region and a stationary peripheral stalk. During catalysis, ATP synthesis in the catalytic domain of F(1) is coupled via a rotary mechanism of the central stalk subunits to proton translocation. With the subunit a (MT-ATP6), forms the proton-conducting channel in the F(0) domain, that contains two crucial half-channels (inlet and outlet) that facilitate proton movement from the mitochondrial intermembrane space (IMS) into the matrix. Protons are taken up via the inlet half-channel and released through the outlet half-channel, following a Grotthuss mechanism. This Homo sapiens (Human) protein is ATP synthase F(0) complex subunit C1, mitochondrial.